The primary structure comprises 145 residues: Probable 4-amino-4-deoxy-L-arabinose-phosphoundecaprenol flippase subunit ArnF (145 aa).

Residues 1 to 3 (MAH) are Cytoplasmic-facing. The helical transmembrane segment at 4-24 (LTLSIRGLLLALMSVLLISVA) threads the bilayer. Residues 25–61 (QLSMKWGMGTLNQLWSDLVMLWQGEDYSSLFSQALAP) lie on the Periplasmic side of the membrane. Residues 62-82 (VMAVGAGLFCYALSMACWVMA) form a helical membrane-spanning segment. The Cytoplasmic segment spans residues 83–89 (LKRLPLS). Residues 90–110 (IAYPLLSLSYVLVYLGAVYLP) form a helical membrane-spanning segment. Residues 111–114 (WLNE) lie on the Periplasmic side of the membrane. A helical membrane pass occupies residues 115–135 (PLSWVKGTGIFLILLGLIFVL). Over 136-145 (PKKNQTSDKS) the chain is Cytoplasmic.

The protein belongs to the ArnF family. As to quaternary structure, heterodimer of ArnE and ArnF.

It localises to the cell inner membrane. It functions in the pathway bacterial outer membrane biogenesis; lipopolysaccharide biosynthesis. In terms of biological role, translocates 4-amino-4-deoxy-L-arabinose-phosphoundecaprenol (alpha-L-Ara4N-phosphoundecaprenol) from the cytoplasmic to the periplasmic side of the inner membrane. The chain is Probable 4-amino-4-deoxy-L-arabinose-phosphoundecaprenol flippase subunit ArnF from Shewanella sediminis (strain HAW-EB3).